The primary structure comprises 190 residues: dTTP/UTP pyrophosphatase (190 aa).

Asp70 (proton acceptor) is an active-site residue.

Belongs to the Maf family. YhdE subfamily. A divalent metal cation serves as cofactor.

Its subcellular location is the cytoplasm. It catalyses the reaction dTTP + H2O = dTMP + diphosphate + H(+). It carries out the reaction UTP + H2O = UMP + diphosphate + H(+). In terms of biological role, nucleoside triphosphate pyrophosphatase that hydrolyzes dTTP and UTP. May have a dual role in cell division arrest and in preventing the incorporation of modified nucleotides into cellular nucleic acids. The chain is dTTP/UTP pyrophosphatase from Gloeobacter violaceus (strain ATCC 29082 / PCC 7421).